We begin with the raw amino-acid sequence, 40 residues long: Light-harvesting protein B800/830/1020 beta-1 chain (40 aa).

At 1–20 (ANDIRPLRDFEDEEAQEFHQ) the chain is on the cytoplasmic side. 2 residues coordinate a bacteriochlorophyll: His-19 and His-37. A helical membrane pass occupies residues 21-40 (AAVQAFFLYVAVAFVAHLPV).

Belongs to the antenna complex beta subunit family. As to quaternary structure, the core complex is formed by different alpha and beta chains, binding bacteriochlorophyll molecules, and arranged most probably in tetrameric structures disposed around the reaction center. The non-pigmented gamma chains may constitute additional components.

It localises to the cell inner membrane. Functionally, antenna complexes are light-harvesting systems, which transfer the excitation energy to the reaction centers. This Halorhodospira halochloris (Ectothiorhodospira halochloris) protein is Light-harvesting protein B800/830/1020 beta-1 chain.